We begin with the raw amino-acid sequence, 29 residues long: Snaclec multactivase regulatory subunit (29 aa).

The C-type lectin domain occupies Asp1–Cys29. The cysteines at positions 2 and 13 are disulfide-linked.

This sequence belongs to the snaclec family. In terms of assembly, heterodimer of a metalloproteinase subunit and a regulatory subunit comprising two homologous polypeptides disulfide-linked. Expressed by the venom gland.

It localises to the secreted. Its function is as follows. Multactivase, a carinactivase-like calcium-dependent prothrombin activator, activates prothrombin via recognition of the calcium ion bound conformation of its gamma-carboxyglutamic acid (GLA) domain, and the subsequent conversion of prothrombin to active thrombin is catalyzed by the catalytic subunit. In Echis multisquamatus (Central Asian sand viper), this protein is Snaclec multactivase regulatory subunit.